A 549-amino-acid polypeptide reads, in one-letter code: Protein X92 (549 aa).

The polypeptide is Protein X92 (Trypanosoma brucei brucei).